The chain runs to 831 residues: Protein translocase subunit SecA (831 aa).

ATP is bound by residues Gln88, 106–110, and Asp495; that span reads GEGKT. Cys816, Cys818, Cys827, and Cys828 together coordinate Zn(2+).

The protein belongs to the SecA family. As to quaternary structure, monomer and homodimer. Part of the essential Sec protein translocation apparatus which comprises SecA, SecYEG and auxiliary proteins SecDF-YajC and YidC. Zn(2+) serves as cofactor.

The protein resides in the cell membrane. It is found in the cytoplasm. It catalyses the reaction ATP + H2O + cellular proteinSide 1 = ADP + phosphate + cellular proteinSide 2.. Part of the Sec protein translocase complex. Interacts with the SecYEG preprotein conducting channel. Has a central role in coupling the hydrolysis of ATP to the transfer of proteins into and across the cell membrane, serving as an ATP-driven molecular motor driving the stepwise translocation of polypeptide chains across the membrane. In Lawsonia intracellularis (strain PHE/MN1-00), this protein is Protein translocase subunit SecA.